Reading from the N-terminus, the 161-residue chain is Nucleotide-binding protein PBPRA2024 (161 aa).

The protein belongs to the YajQ family.

Nucleotide-binding protein. This Photobacterium profundum (strain SS9) protein is Nucleotide-binding protein PBPRA2024.